Reading from the N-terminus, the 612-residue chain is E3 ubiquitin-protein ligase synoviolin (612 aa).

Residues 1-4 (MFRT) are Cytoplasmic-facing. Residues 1–251 (MFRTAVMMAA…LFAIRPMYLA (251 aa)) form an involved in FAM8A1 interaction region. The helical transmembrane segment at 5 to 25 (AVMMAASLALTGAVVAHAYYL) threads the bilayer. An interaction with SEL1L region spans residues 21–42 (HAYYLKHQFYPTVVYLTKSSPS). Residues 26-41 (KHQFYPTVVYLTKSSP) lie on the Lumenal side of the membrane. The helical transmembrane segment at 42 to 62 (SMAVLYIQAFVLVFLLGKVMG) threads the bilayer. Residues 63 to 98 (KVFFGQLRAAEMEHLLERSWYAVTETCLAFTVFRDD) lie on the Cytoplasmic side of the membrane. A helical transmembrane segment spans residues 99 to 119 (FSPRFVALFTLLLFLKCFHWL). Residues 120–140 (AEDRVDFMERSPNISWLFHCR) are Lumenal-facing. Residues 141 to 161 (IVSLMFLLGILDFLFVSHAYH) traverse the membrane as a helical segment. Topologically, residues 162-169 (SILTRGAS) are cytoplasmic. Residues 170–190 (VQLVFGFEYAILMTMVLTIFI) form a helical membrane-spanning segment. The Lumenal segment spans residues 191–224 (KYVLHSVDLQSENPWDNKAVYMLYTELFTGFIKV). A helical membrane pass occupies residues 225–245 (LLYMAFMTIMIKVHTFPLFAI). The interaction with p53/TP53 stretch occupies residues 236 to 270 (KVHTFPLFAIRPMYLAMRQFKKAVTDAIMSRRAIR). At 246 to 612 (RPMYLAMRQF…LQKLESPVAH (367 aa)) the chain is on the cytoplasmic side. 8 residues coordinate Zn(2+): Cys291, Cys294, Cys307, His309, His312, Cys315, Cys326, and Cys329. The RING-type; atypical zinc finger occupies 291–330 (CIICREEMVTGAKRLPCNHIFHTSCLRSWFQRQQTCPTCR). Disordered regions lie at residues 337–375 (SLPAQSPPPPEPADQGPPPAPHPQPLLPQPPNFPQGLLP) and 393–449 (PVPP…PGFP). Pro residues-rich tracts occupy residues 341–375 (QSPPPPEPADQGPPPAPHPQPLLPQPPNFPQGLLP) and 393–409 (PVPPPPSSGEAAAPPPT). Positions 416–434 (PSGAATTTAAGTSTSAPAP) are enriched in low complexity. The segment covering 435-449 (GSVPGPEAGPAPGFP) has biased composition (pro residues). The segment at 474–529 (GFAGLTPEELRALEGHERQHLEARLQSLRNIHTLLDAAMLQINQYLTVLASLGPPR) is HAF-H domain; necessary to form higher-order Hrd1 complexes. The interval 530-612 (PATSVNPTEE…LQKLESPVAH (83 aa)) is disordered. Low complexity predominate over residues 539 to 559 (ETASTVVSAAPSTSAPSSEAP). Residues 560–570 (TPSPGASPPIP) show a composition bias toward pro residues. Acidic residues predominate over residues 586–595 (ELPEDGEPDA). Residue Ser608 is modified to Phosphoserine.

This sequence belongs to the HRD1 family. As to quaternary structure, homodimer. Interacts with p53/TP53. Interacts with HTT. Component of the HRD1 complex, which comprises at least SYNV1/HRD1, DERL1/2, FAM8A1, HERPUD1/HERP, OS9, SEL1L and UBE2J1. FAM8A1 is stabilized by interaction with SYNV1, which prevents its proteasomal degradation. OS9 and UBE2J1 recruitment to the complex may be mediated by SEL1L. SYNV1 assembles with SEL1L and FAM8A1 through its transmembrane domains, but interaction with its cytoplasmic domain is required to confer stability to FAM8A1 and enhance recruitment of HERPUD1. The HRD1 complex also associates with VIMP and may transfer misfolded proteins from the endoplasmic reticulum to VCP. May form a complex with ERLEC1; HSPA5; OS9 and SEL1L. Interacts with VCP. Interacts with UBXN6. Interacts with BAG6. Interacts with NFE2L1. Interacts (via N-terminus) with components of the pre-B cell receptor, including IGLL1 and VPREB1A. Interacts with CREB3L3; this interaction leads to CREB3L3 ubiquitination and proteasomal degradation. Post-translationally, auto-ubiquitinated. Deubiquitinated by USP19. As to expression, widely expressed, with highest levels in bone, spleen, lung and testis. In the brain, present in neurons but not in glial cells. Up-regulated in synovial tissues from mice with collagen-induced arthritis (at protein level). Expressed in the liver.

The protein resides in the endoplasmic reticulum membrane. It catalyses the reaction S-ubiquitinyl-[E2 ubiquitin-conjugating enzyme]-L-cysteine + [acceptor protein]-L-lysine = [E2 ubiquitin-conjugating enzyme]-L-cysteine + N(6)-ubiquitinyl-[acceptor protein]-L-lysine.. It participates in protein modification; protein ubiquitination. Its function is as follows. E3 ubiquitin-protein ligase which accepts ubiquitin specifically from endoplasmic reticulum-associated UBC7 E2 ligase and transfers it to substrates, promoting their degradation. Component of the endoplasmic reticulum quality control (ERQC) system also called ER-associated degradation (ERAD) involved in ubiquitin-dependent degradation of misfolded endoplasmic reticulum proteins. Also promotes the degradation of normal but naturally short-lived proteins such as SGK. Protects cells from ER stress-induced apoptosis. Sequesters p53/TP53 in the cytoplasm and promotes its degradation, thereby negatively regulating its biological function in transcription, cell cycle regulation and apoptosis. Required for embryogenesis. Mediates the ubiquitination and subsequent degradation of cytoplasmic NFE2L1. During the early stage of B cell development, required for degradation of the pre-B cell receptor (pre-BCR) complex, hence supporting further differentiation into mature B cells. In Mus musculus (Mouse), this protein is E3 ubiquitin-protein ligase synoviolin (Syvn1).